The primary structure comprises 341 residues: Phosphate acyltransferase (341 aa).

This sequence belongs to the PlsX family. Homodimer. Probably interacts with PlsY.

The protein resides in the cytoplasm. It carries out the reaction a fatty acyl-[ACP] + phosphate = an acyl phosphate + holo-[ACP]. It functions in the pathway lipid metabolism; phospholipid metabolism. In terms of biological role, catalyzes the reversible formation of acyl-phosphate (acyl-PO(4)) from acyl-[acyl-carrier-protein] (acyl-ACP). This enzyme utilizes acyl-ACP as fatty acyl donor, but not acyl-CoA. This Aliivibrio fischeri (strain ATCC 700601 / ES114) (Vibrio fischeri) protein is Phosphate acyltransferase.